We begin with the raw amino-acid sequence, 765 residues long: Phosphoribosylformylglycinamidine synthase subunit PurL (765 aa).

The active site involves H41. ATP-binding residues include Y44 and K83. Position 85 (E85) interacts with Mg(2+). Substrate is bound by residues 86–89 and R108; that span reads SHNH. H87 acts as the Proton acceptor in catalysis. Residue D109 coordinates Mg(2+). Q232 contacts substrate. Position 260 (D260) interacts with Mg(2+). Substrate is bound at residue 304–306; that stretch reads ESQ. Residues D503 and G540 each contribute to the ATP site. N541 contacts Mg(2+). Residue S543 participates in substrate binding.

Belongs to the FGAMS family. In terms of assembly, monomer. Part of the FGAM synthase complex composed of 1 PurL, 1 PurQ and 2 PurS subunits.

It is found in the cytoplasm. It carries out the reaction N(2)-formyl-N(1)-(5-phospho-beta-D-ribosyl)glycinamide + L-glutamine + ATP + H2O = 2-formamido-N(1)-(5-O-phospho-beta-D-ribosyl)acetamidine + L-glutamate + ADP + phosphate + H(+). It participates in purine metabolism; IMP biosynthesis via de novo pathway; 5-amino-1-(5-phospho-D-ribosyl)imidazole from N(2)-formyl-N(1)-(5-phospho-D-ribosyl)glycinamide: step 1/2. Its function is as follows. Part of the phosphoribosylformylglycinamidine synthase complex involved in the purines biosynthetic pathway. Catalyzes the ATP-dependent conversion of formylglycinamide ribonucleotide (FGAR) and glutamine to yield formylglycinamidine ribonucleotide (FGAM) and glutamate. The FGAM synthase complex is composed of three subunits. PurQ produces an ammonia molecule by converting glutamine to glutamate. PurL transfers the ammonia molecule to FGAR to form FGAM in an ATP-dependent manner. PurS interacts with PurQ and PurL and is thought to assist in the transfer of the ammonia molecule from PurQ to PurL. The protein is Phosphoribosylformylglycinamidine synthase subunit PurL of Synechococcus sp. (strain WH7803).